Reading from the N-terminus, the 1053-residue chain is Probable sucrose-phosphate synthase (1053 aa).

Positions 103–115 are enriched in basic and acidic residues; sequence RRQERERGRREAV. Disordered regions lie at residues 103-127 and 673-693; these read RRQE…EGEK and LRSI…DSLR.

This sequence belongs to the glycosyltransferase 1 family. Homodimer or homotetramer.

The enzyme catalyses beta-D-fructose 6-phosphate + UDP-alpha-D-glucose = sucrose 6(F)-phosphate + UDP + H(+). The protein operates within glycan biosynthesis; sucrose biosynthesis; sucrose from D-fructose 6-phosphate and UDP-alpha-D-glucose: step 1/2. With respect to regulation, activity is regulated by phosphorylation and moderated by concentration of metabolites and light. Plays a role in photosynthetic sucrose synthesis by catalyzing the rate-limiting step of sucrose biosynthesis from UDP-glucose and fructose- 6-phosphate. Involved in the regulation of carbon partitioning in the leaves of plants. May regulate the synthesis of sucrose and therefore play a major role as a limiting factor in the export of photoassimilates out of the leaf. Plays a role for sucrose availability that is essential for plant growth and fiber elongation. The polypeptide is Probable sucrose-phosphate synthase (SPS) (Solanum tuberosum (Potato)).